We begin with the raw amino-acid sequence, 136 residues long: Large ribosomal subunit protein uL16 (136 aa).

The protein belongs to the universal ribosomal protein uL16 family. In terms of assembly, part of the 50S ribosomal subunit.

Binds 23S rRNA and is also seen to make contacts with the A and possibly P site tRNAs. In Mesomycoplasma hyopneumoniae (strain 232) (Mycoplasma hyopneumoniae), this protein is Large ribosomal subunit protein uL16.